The chain runs to 627 residues: MTQALQVPSAPARCRHLRRKNGVLLRIVEKTDRTRYAHALRHGCRHRMCEGVHGTEEDAMGSESAEMDSPHATARPQEQGEDRAWDACGVWVKVPPEAQEPPVSSGGPEDPEAPAQHAPPGARVDAVRHHVYRALPVQSSAEDSRGFVDLSVEDEVLARGCSHAPGGESSSDQAADAPAGDAAYSEVPSFDDLVTRTAQSQDDRVDLSAAMSSVVTEEPPEPRGCSMPCPSGSCDTTEFDDLLSSLSHDAPEYPVDSDPITYSASEPSSEGPVRGAPFSDVDAVAQSLMGDAQVAAQGAQASTSGDASTDLLLKIAQEISSIRADLDQLKGTFSRQAGAEPAQAPATAPAPEGTEAAYSGFFCDDDPDETIALTNDELNNILITSEFTEEDGKDSAADAFGGELSGFESSHIGSAAGDFSYLEEDDHAAARVAQEQWVQQGRATLGNEVFDVKEQGAHADRDAAADPSPVAKDDASPEAQRAHVSSTGLDAAGAEQPLNTENVFDDEDTQREDTSFPLPEEQELDVSVPSLEFSAPHAIETAASESSEVATPVAIESPPQSEAARPAQGDSANLAPPLSKSLADEVRSVLGYMDRLLESLPEEKIEEFARSEYFHTYKHLFDELGIS.

Disordered regions lie at residues 57 to 82 (EDAM…QGED), 96 to 121 (PEAQ…APPG), 160 to 184 (GCSH…DAAY), 198 to 232 (AQSQ…CPSG), 247 to 277 (SHDA…RGAP), 335 to 358 (RQAG…EAAY), and 449 to 579 (VFDV…PPLS). A compositionally biased stretch (low complexity) spans 169–183 (SSSDQAADAPAGDAA). Low complexity predominate over residues 336–357 (QAGAEPAQAPATAPAPEGTEAA). Basic and acidic residues predominate over residues 450-464 (FDVKEQGAHADRDAA).

This is an uncharacterized protein from Treponema pallidum (strain Nichols).